We begin with the raw amino-acid sequence, 443 residues long: BBSome complex member BBS5 homolog (443 aa).

The protein belongs to the BBS5 family.

The protein resides in the cytoplasm. Its subcellular location is the cytoskeleton. It localises to the flagellum axoneme. The chain is BBSome complex member BBS5 homolog from Giardia intestinalis (strain ATCC 50803 / WB clone C6) (Giardia lamblia).